A 320-amino-acid polypeptide reads, in one-letter code: Major pollen allergen Pha a 5.1 (320 aa).

Positions 1 to 23 (MAVQKYTMALFLAVALVAGPAAP) are cleaved as a signal peptide. Positions 21-45 (AAPTPPTPRTPPLLPPPRARDKATL) are disordered. The span at 22-37 (APTPPTPRTPPLLPPP) shows a compositional bias: pro residues.

The protein belongs to the Poa p IX/Phl p VI allergen family.

The protein is Major pollen allergen Pha a 5.1 of Phalaris aquatica (Canary grass).